The primary structure comprises 159 residues: MKTHLLLWGVLAIFVKAVLVTGDDEATILADNKCMCTRVTSRIIPSTEDPNEDIVERNIRIVVPLNNRENISDPTSPLRRNFVYHLSDVCKKCDPVEVELEDQVVTATQSNICNEDDGVPETCYMYDRNKCYTTMVPLRYHGETKMVQAALTPDSCYPD.

The N-terminal stretch at 1–21 (MKTHLLLWGVLAIFVKAVLVT) is a signal peptide. Disulfide bonds link C34–C123, C93–C113, and C131–C156. N70 carries an N-linked (GlcNAc...) (complex) asparagine glycan.

In terms of assembly, part of the secretory IgA (sIgA) complex that consists of two, four or five IgA monomers, and two additional non-Ig polypeptides, namely the JCHAIN and the secretory component (the proteolytic product of PIGR). Part of the secretory IgM (sIgM) complex that consist of five IgM monomers, and two additional non-Ig polypeptides, namely the JCHAIN and the secretory component (the proteolytic product of PIGR). JCHAIN-containing IgM interacts (via CH4 domain) with FCRM (via Ig-like domain).

The protein resides in the secreted. In terms of biological role, serves to link two monomer units of either IgM or IgA. In the case of IgM, the J chain-joined dimer is a nucleating unit for the IgM pentamer, and in the case of IgA it induces dimers and/or larger polymers. It also helps to bind these immunoglobulins to secretory component. This chain is Immunoglobulin J chain, found in Mus musculus (Mouse).